The following is a 125-amino-acid chain: Large ribosomal subunit protein bL12 (125 aa).

Belongs to the bacterial ribosomal protein bL12 family. In terms of assembly, homodimer. Part of the ribosomal stalk of the 50S ribosomal subunit. Forms a multimeric L10(L12)X complex, where L10 forms an elongated spine to which 2 to 4 L12 dimers bind in a sequential fashion. Binds GTP-bound translation factors.

Its function is as follows. Forms part of the ribosomal stalk which helps the ribosome interact with GTP-bound translation factors. Is thus essential for accurate translation. The polypeptide is Large ribosomal subunit protein bL12 (Dictyoglomus thermophilum (strain ATCC 35947 / DSM 3960 / H-6-12)).